A 255-amino-acid chain; its full sequence is Indole-3-glycerol phosphate synthase (255 aa).

It belongs to the TrpC family.

The enzyme catalyses 1-(2-carboxyphenylamino)-1-deoxy-D-ribulose 5-phosphate + H(+) = (1S,2R)-1-C-(indol-3-yl)glycerol 3-phosphate + CO2 + H2O. The protein operates within amino-acid biosynthesis; L-tryptophan biosynthesis; L-tryptophan from chorismate: step 4/5. The sequence is that of Indole-3-glycerol phosphate synthase from Streptococcus mutans serotype c (strain ATCC 700610 / UA159).